Consider the following 908-residue polypeptide: 5'-3' exoribonuclease 2 homolog (908 aa).

The segment at 263–280 (RPCDICNGFGHEMDKCVG) adopts a CCHC-type zinc-finger fold. 2 disordered regions span residues 409–457 (RQRR…VGNY) and 821–908 (GGNQ…YRRF). Positions 432-454 (HGSLNQSAFGASAVGPNSQQRSV) are enriched in polar residues. Phosphoserine is present on serine 438. 2 stretches are compositionally biased toward low complexity: residues 825-868 (GQSY…HNQR) and 878-908 (QRNF…YRRF).

This sequence belongs to the 5'-3' exonuclease family. XRN2/RAT1 subfamily. In terms of assembly, interacts with cuff and Rai1; the interaction with cuff may inhibit its role in RNA degradation.

The protein localises to the nucleus. A 5'-3' exoribonuclease. May promote the termination of transcription by RNA polymerase II and promote RNA degradation. Involved in turnover of piRNA precursors. This is 5'-3' exoribonuclease 2 homolog from Drosophila melanogaster (Fruit fly).